The primary structure comprises 237 residues: Flagellar L-ring protein (237 aa).

Residues 1–24 (MNRLSVPRFSVLIASLCGITLLSG) form the signal peptide. The N-palmitoyl cysteine moiety is linked to residue Cys-25. Residue Cys-25 is the site of S-diacylglycerol cysteine attachment.

Belongs to the FlgH family. The basal body constitutes a major portion of the flagellar organelle and consists of four rings (L,P,S, and M) mounted on a central rod.

The protein localises to the cell outer membrane. Its subcellular location is the bacterial flagellum basal body. Its function is as follows. Assembles around the rod to form the L-ring and probably protects the motor/basal body from shearing forces during rotation. The polypeptide is Flagellar L-ring protein (Pseudomonas syringae pv. syringae (strain B728a)).